The primary structure comprises 174 residues: RNA pyrophosphohydrolase (174 aa).

Residues 6–150 (GFRPNVGIVI…KREVYRRVMK (145 aa)) form the Nudix hydrolase domain. The Nudix box motif lies at 38 to 59 (GGVDDGETPEQAMFRELYEEIG).

Belongs to the Nudix hydrolase family. RppH subfamily. A divalent metal cation serves as cofactor.

Accelerates the degradation of transcripts by removing pyrophosphate from the 5'-end of triphosphorylated RNA, leading to a more labile monophosphorylated state that can stimulate subsequent ribonuclease cleavage. The polypeptide is RNA pyrophosphohydrolase (Tolumonas auensis (strain DSM 9187 / NBRC 110442 / TA 4)).